A 466-amino-acid polypeptide reads, in one-letter code: tRNA modification GTPase MnmE (466 aa).

Positions 25, 82, and 127 each coordinate (6S)-5-formyl-5,6,7,8-tetrahydrofolate. One can recognise a TrmE-type G domain in the interval Gly-223–Gly-388. Asn-233 is a K(+) binding site. GTP-binding positions include Asn-233–Ser-238, Thr-252–Thr-258, Asp-277–Gly-280, Asn-346–Asp-349, and Ser-369–Arg-371. Ser-237 serves as a coordination point for Mg(2+). Positions 252, 254, and 257 each coordinate K(+). Thr-258 provides a ligand contact to Mg(2+). A (6S)-5-formyl-5,6,7,8-tetrahydrofolate-binding site is contributed by Lys-466.

This sequence belongs to the TRAFAC class TrmE-Era-EngA-EngB-Septin-like GTPase superfamily. TrmE GTPase family. Homodimer. Heterotetramer of two MnmE and two MnmG subunits. The cofactor is K(+).

The protein localises to the cytoplasm. Functionally, exhibits a very high intrinsic GTPase hydrolysis rate. Involved in the addition of a carboxymethylaminomethyl (cmnm) group at the wobble position (U34) of certain tRNAs, forming tRNA-cmnm(5)s(2)U34. The chain is tRNA modification GTPase MnmE from Acidovorax sp. (strain JS42).